Here is a 463-residue protein sequence, read N- to C-terminus: Cis-zeatin O-glucosyltransferase 2 (463 aa).

The active-site Proton acceptor is His-21. An anthocyanidin is bound by residues His-21 and Asn-91. Asp-127 acts as the Charge relay in catalysis. 9 residues coordinate UDP-alpha-D-glucose: Ala-339, Gln-341, His-356, Trp-359, Asn-360, Ser-361, Glu-364, Asp-380, and Gln-381.

Belongs to the UDP-glycosyltransferase family. As to expression, highly expressed in root. Expressed at much lower level in kernel. Weakly or not expressed in expressed in stems and leaves.

The enzyme catalyses cis-zeatin + UDP-alpha-D-glucose = O-beta-D-glucosyl-cis-zeatin + UDP + H(+). Functionally, utilizes UDP-glucose as the sugar donor and catalyzes the formation of O-beta-D-glucosyl-cis-zeatin from cis-zeatin. May regulate active versus storage forms of cytokinins and could have an impact on seed growth. The polypeptide is Cis-zeatin O-glucosyltransferase 2 (Zea mays (Maize)).